We begin with the raw amino-acid sequence, 62 residues long: UPF0434 protein RHECIAT_CH0004260 (62 aa).

Belongs to the UPF0434 family.

The chain is UPF0434 protein RHECIAT_CH0004260 from Rhizobium etli (strain CIAT 652).